A 1042-amino-acid chain; its full sequence is Starch synthase 3, chloroplastic/amyloplastic (1042 aa).

A chloroplast-targeting transit peptide spans 1–44; the sequence is MISYFLNQDFSRKKQGRMAASGPKSSGPRGFGRRTTVGSAQKRT. The tract at residues 1–63 is disordered; the sequence is MISYFLNQDF…NATSTATNEV (63 aa). The span at 54-63 shows a compositional bias: polar residues; that stretch reads NATSTATNEV. Positions 247–302 form a coiled coil; that stretch reads ENFLLEEKLREQEKLAKEEAERERQKEEKRRIEAQKAAIEADRAQAKAETQKRREL. Lys608 contributes to the ADP-alpha-D-glucose binding site.

This sequence belongs to the glycosyltransferase 1 family. Bacterial/plant glycogen synthase subfamily. In terms of tissue distribution, expressed in leaves and flowers.

The protein resides in the plastid. It localises to the chloroplast. Its subcellular location is the amyloplast. The catalysed reaction is [(1-&gt;4)-alpha-D-glucosyl](n) + ADP-alpha-D-glucose = [(1-&gt;4)-alpha-D-glucosyl](n+1) + ADP + H(+). The protein operates within glycan biosynthesis; starch biosynthesis. In terms of biological role, involved in the synthesis of glycan chains within amylopectin in leaves. May play a regulatory role in the control of starch accumulation in plastids. In Arabidopsis thaliana (Mouse-ear cress), this protein is Starch synthase 3, chloroplastic/amyloplastic (SS3).